The following is a 69-amino-acid chain: Large ribosomal subunit protein bL32c (69 aa).

Belongs to the bacterial ribosomal protein bL32 family.

The protein localises to the plastid. The protein resides in the chloroplast. In Pelargonium hortorum (Common geranium), this protein is Large ribosomal subunit protein bL32c.